The primary structure comprises 260 residues: Proteasome subunit alpha (260 aa).

It belongs to the peptidase T1A family. As to quaternary structure, the 20S proteasome core is composed of 14 alpha and 14 beta subunits that assemble into four stacked heptameric rings, resulting in a barrel-shaped structure. The two inner rings, each composed of seven catalytic beta subunits, are sandwiched by two outer rings, each composed of seven alpha subunits. The catalytic chamber with the active sites is on the inside of the barrel. Has a gated structure, the ends of the cylinder being occluded by the N-termini of the alpha-subunits. Is capped at one or both ends by the proteasome regulatory ATPase, PAN.

It is found in the cytoplasm. With respect to regulation, the formation of the proteasomal ATPase PAN-20S proteasome complex, via the docking of the C-termini of PAN into the intersubunit pockets in the alpha-rings, triggers opening of the gate for substrate entry. Interconversion between the open-gate and close-gate conformations leads to a dynamic regulation of the 20S proteasome proteolysis activity. Its function is as follows. Component of the proteasome core, a large protease complex with broad specificity involved in protein degradation. In Thermococcus kodakarensis (strain ATCC BAA-918 / JCM 12380 / KOD1) (Pyrococcus kodakaraensis (strain KOD1)), this protein is Proteasome subunit alpha.